Consider the following 1551-residue polypeptide: Transient receptor potential cation channel subfamily M member-like 2 (1551 aa).

Over 1-714 (MGKDSFTPLY…WMGTMAMNTR (714 aa)) the chain is Cytoplasmic. An intramembrane segment occupies 715 to 730 (WWKVLVCLYLPVLIFP). Topologically, residues 731–837 (IIYFVPDEQH…DRIMHFYSAP (107 aa)) are cytoplasmic. The tract at residues 744–767 (AAEREHQKSLNQKSSKVKSHKEKN) is disordered. The chain crosses the membrane as a helical span at residues 838-858 (FSKFVGNVVGYLAFIFLYAYV). Over 859–877 (VLFNFPRFDPAKTLGGIHP) the chain is Extracellular. The chain crosses the membrane as a helical span at residues 878-898 (TEIVLYFWVFTILIEEIRQLA). Ca(2+) contacts are provided by glutamate 893 and glutamine 896. At 899-916 (AKPPKYIKDKVSVYFSDT) the chain is on the cytoplasmic side. Residues 917-937 (WNFVDIFSLTVFIIAIILRFF) traverse the membrane as a helical segment. Ca(2+) contacts are provided by asparagine 918 and aspartate 921. Topologically, residues 938 to 947 (TNSRIFTASR) are extracellular. Residues 948-968 (IILSLDIIFFIVRSLQIFSVN) traverse the membrane as a helical segment. Over 969–980 (RLLGPKLVMIQK) the chain is Cytoplasmic. The chain crosses the membrane as a helical span at residues 981–1001 (MMQDLAQFIIILAVFTIAYGI). Residues 1002–1018 (ALHAVMFPSPGIYARNN) lie on the Extracellular side of the membrane. The N-linked (GlcNAc...) asparagine glycan is linked to asparagine 1017. Positions 1019 to 1034 (TWVTITSVVQYPYWQM) form an intramembrane region, pore-forming. The short motif at 1035-1037 (YGE) is the Selectivity filter element. The Extracellular portion of the chain corresponds to 1035 to 1059 (YGELFLDEIQGEKPKEFGEVDPDGR). A Prevents fast channel inactivation motif is present at residues 1040 to 1042 (LDE). Residues 1060-1080 (WLSPLLLAIYMVFTNILLLNL) traverse the membrane as a helical segment. At 1081 to 1116 (LIAIFNYTFERVQEDSDKVWKFQRYDLVQEYHSRPV) the chain is on the cytoplasmic side. Residues 1117 to 1135 (FAPPLVLLGHILIFIRWVW) lie within the membrane without spanning it. Over 1136-1551 (RMCRCGHPPR…KVAKMRDAAF (416 aa)) the chain is Cytoplasmic. Residues 1184–1209 (LEERVRALGDRVDCINSQLNRVLDSM) are a coiled coil. The region spanning 1394-1546 (WKRTSAGVML…VSILEKVAKM (153 aa)) is the Nudix hydrolase domain. The short motif at 1428-1449 (GMVEPGQLVTQALKAEFGEEAM) is the Nudix box element.

Belongs to the transient receptor (TC 1.A.4) family. LTrpC subfamily. TRPM2 sub-subfamily. In terms of assembly, homotetramer.

Its subcellular location is the cell membrane. Its activity is regulated as follows. Activated by phosphatidylinositol 4,5-bisphosphate (PIP2). Although PIP2 is essential for the channel activation, its contribution to the level of channel activity is minimal. Also activated by diphosphate ribose-2'-phosphate. Upon binding to ADPR, channel activation requires only a short initial cytosolic Ca(2+) increase, then the activation is sustained by the uptake of extracellular Ca(2+). Activated by 2-aminoethyl diphenylborinate (2-APB) in a Ca(2+)-dependent manner. 2-APB prevents the inactivation of the channel. Functionally, nonselective, voltage-independent cation channel that mediates Ca(2+) and to a lesser extent Na(+) influx, leading to increased cytoplasmic Ca(2+) levels. Functions as a ligand-gated ion channel. Binding of ADP-ribose causes a conformation change; the channel is primed but still requires Ca(2+) binding to trigger channel opening. May have ADP-ribose pyrophosphatase activity which reduces ADP-ribose levels induced by oxidative stress, thus preventing the channel activation by reactive oxygen species. This is Transient receptor potential cation channel subfamily M member-like 2 from Nematostella vectensis (Starlet sea anemone).